A 98-amino-acid polypeptide reads, in one-letter code: Small ribosomal subunit protein bS6 (98 aa).

The protein belongs to the bacterial ribosomal protein bS6 family.

Functionally, binds together with bS18 to 16S ribosomal RNA. In Staphylococcus epidermidis (strain ATCC 35984 / DSM 28319 / BCRC 17069 / CCUG 31568 / BM 3577 / RP62A), this protein is Small ribosomal subunit protein bS6.